A 104-amino-acid polypeptide reads, in one-letter code: MSSVFEIVNQARRKNKLKRELLDNEKKVRDNRKRVDLLENLLDYIKPEMTHDEIVAIIKNMKADYEDRVDDHIIKSAEISKARRDISRRIRELTEEDKQTSGKK.

2 coiled-coil regions span residues 7–34 (IVNQ…NRKR) and 76–96 (SAEI…LTEE).

This sequence belongs to the pole-localizer TmaR family.

The protein localises to the cytoplasm. Functionally, pole-localizer protein involved in the regulation of several cellular processes. In Vibrio campbellii (strain ATCC BAA-1116), this protein is Pole-localizer protein TmaR.